Here is a 784-residue protein sequence, read N- to C-terminus: Ubiquitin carboxyl-terminal hydrolase 1 (784 aa).

Disordered stretches follow at residues 1 to 21 and 33 to 54; these read MPGVIPSESNGLSRGSPSKKN and TKRALDFTDSQEDEEKASEYRG. The span at 7-16 shows a compositional bias: polar residues; sequence SESNGLSRGS. S16, S42, and S67 each carry phosphoserine. The USP domain maps to 81–784; the sequence is VGLNNLGNTC…TPYLLFYKKL (704 aa). The active-site Nucleophile is C90. Basic and acidic residues-rich tracts occupy residues 232-243 and 252-264; these read KVEEKSLQKEET and DSTRNLDDLKEQL. 2 disordered regions span residues 232 to 341 and 363 to 411; these read KVEE…KINW and TNQR…SSEA. The segment covering 389-407 has biased composition (polar residues); sequence NTVNGSGPASPGSSVTPVD. Position 475 is a phosphoserine (S475). H593 serves as the catalytic Proton acceptor. The tract at residues 686-723 is disordered; it reads PEKVVGTPFTDSRNSETNDTNGTQESDRSKESSDQTGI. Positions 694–709 are enriched in polar residues; it reads FTDSRNSETNDTNGTQ. Residue S767 is modified to Phosphoserine.

The protein belongs to the peptidase C19 family. Interacts with FANCD2 and PCNA. Interacts with WDR48. Interacts with ATAD5; the interaction regulates USP1-mediated PCNA deubiquitination. Post-translationally, autocatalytic cleavage of USP1 following UV irradiation inactivates it, leading to an increase in ubiquitinated PCNA, recruitment of POLH and translesion synthesis. In terms of processing, ubiquitinated by the CRL2(KLHDC2) complex following autocatalytic cleavage, leading to its degradation: the CRL2(KLHDC2) complex recognizes the diglycine (Gly-Gly) at the C-terminus.

Its subcellular location is the nucleus. It catalyses the reaction Thiol-dependent hydrolysis of ester, thioester, amide, peptide and isopeptide bonds formed by the C-terminal Gly of ubiquitin (a 76-residue protein attached to proteins as an intracellular targeting signal).. In terms of biological role, negative regulator of DNA damage repair which specifically deubiquitinates monoubiquitinated FANCD2. Also involved in PCNA-mediated translesion synthesis (TLS) by deubiquitinating monoubiquitinated PCNA. Has almost no deubiquitinating activity by itself and requires the interaction with WDR48 to have a high activity. This chain is Ubiquitin carboxyl-terminal hydrolase 1, found in Rattus norvegicus (Rat).